The sequence spans 693 residues: Glycine--tRNA ligase beta subunit (693 aa).

It belongs to the class-II aminoacyl-tRNA synthetase family. In terms of assembly, tetramer of two alpha and two beta subunits.

It is found in the cytoplasm. The catalysed reaction is tRNA(Gly) + glycine + ATP = glycyl-tRNA(Gly) + AMP + diphosphate. This chain is Glycine--tRNA ligase beta subunit, found in Vibrio campbellii (strain ATCC BAA-1116).